A 281-amino-acid chain; its full sequence is Nucleoid occlusion protein (281 aa).

The interval 1–24 (MKHPFSRLFSFGEKEQEEMEEKQE) is disordered. A DNA-binding region (H-T-H motif) is located at residues 145–164 (EALAQRLGKGQSTIANKLRL).

Belongs to the ParB family.

The protein localises to the cytoplasm. The protein resides in the nucleoid. Functionally, effects nucleoid occlusion by binding relatively nonspecifically to DNA and preventing the assembly of the division machinery in the vicinity of the nucleoid, especially under conditions that disturb the cell cycle. It helps to coordinate cell division and chromosome segregation by preventing the formation of the Z ring through the nucleoid, which would cause chromosome breakage. In Geobacillus kaustophilus (strain HTA426), this protein is Nucleoid occlusion protein.